Here is a 249-residue protein sequence, read N- to C-terminus: tRNA (guanine-N(1)-)-methyltransferase (249 aa).

S-adenosyl-L-methionine contacts are provided by residues Gly-113 and 133-138 (IGDFVL).

The protein belongs to the RNA methyltransferase TrmD family. Homodimer.

The protein resides in the cytoplasm. It catalyses the reaction guanosine(37) in tRNA + S-adenosyl-L-methionine = N(1)-methylguanosine(37) in tRNA + S-adenosyl-L-homocysteine + H(+). In terms of biological role, specifically methylates guanosine-37 in various tRNAs. The polypeptide is tRNA (guanine-N(1)-)-methyltransferase (Aliivibrio salmonicida (strain LFI1238) (Vibrio salmonicida (strain LFI1238))).